The chain runs to 382 residues: Lipoyl synthase, mitochondrial (382 aa).

A mitochondrion-targeting transit peptide spans 1 to 30 (MHGRRHLAASLARALTYAPSRSISSTPSLL). Over residues 25 to 34 (STPSLLQTLD) the composition is skewed to polar residues. Residues 25-46 (STPSLLQTLDPSTPSPAAAPPT) form a disordered region. Residues C112, C117, C123, C143, C147, C150, and S359 each coordinate [4Fe-4S] cluster. The region spanning 128 to 348 (ETGTATATIM…RSLGVDMGFR (221 aa)) is the Radical SAM core domain.

This sequence belongs to the radical SAM superfamily. Lipoyl synthase family. [4Fe-4S] cluster serves as cofactor.

It is found in the mitochondrion. The catalysed reaction is [[Fe-S] cluster scaffold protein carrying a second [4Fe-4S](2+) cluster] + N(6)-octanoyl-L-lysyl-[protein] + 2 oxidized [2Fe-2S]-[ferredoxin] + 2 S-adenosyl-L-methionine + 4 H(+) = [[Fe-S] cluster scaffold protein] + N(6)-[(R)-dihydrolipoyl]-L-lysyl-[protein] + 4 Fe(3+) + 2 hydrogen sulfide + 2 5'-deoxyadenosine + 2 L-methionine + 2 reduced [2Fe-2S]-[ferredoxin]. It functions in the pathway protein modification; protein lipoylation via endogenous pathway; protein N(6)-(lipoyl)lysine from octanoyl-[acyl-carrier-protein]: step 2/2. In terms of biological role, catalyzes the radical-mediated insertion of two sulfur atoms into the C-6 and C-8 positions of the octanoyl moiety bound to the lipoyl domains of lipoate-dependent enzymes, thereby converting the octanoylated domains into lipoylated derivatives. In Oryza sativa subsp. japonica (Rice), this protein is Lipoyl synthase, mitochondrial.